We begin with the raw amino-acid sequence, 337 residues long: Lipoyl synthase (337 aa).

The [4Fe-4S] cluster site is built by Cys-81, Cys-86, Cys-92, Cys-107, Cys-111, Cys-114, and Ser-323. In terms of domain architecture, Radical SAM core spans Phe-93 to Ser-312.

This sequence belongs to the radical SAM superfamily. Lipoyl synthase family. It depends on [4Fe-4S] cluster as a cofactor.

The protein resides in the cytoplasm. It catalyses the reaction [[Fe-S] cluster scaffold protein carrying a second [4Fe-4S](2+) cluster] + N(6)-octanoyl-L-lysyl-[protein] + 2 oxidized [2Fe-2S]-[ferredoxin] + 2 S-adenosyl-L-methionine + 4 H(+) = [[Fe-S] cluster scaffold protein] + N(6)-[(R)-dihydrolipoyl]-L-lysyl-[protein] + 4 Fe(3+) + 2 hydrogen sulfide + 2 5'-deoxyadenosine + 2 L-methionine + 2 reduced [2Fe-2S]-[ferredoxin]. It functions in the pathway protein modification; protein lipoylation via endogenous pathway; protein N(6)-(lipoyl)lysine from octanoyl-[acyl-carrier-protein]: step 2/2. Its function is as follows. Catalyzes the radical-mediated insertion of two sulfur atoms into the C-6 and C-8 positions of the octanoyl moiety bound to the lipoyl domains of lipoate-dependent enzymes, thereby converting the octanoylated domains into lipoylated derivatives. In Xanthomonas campestris pv. campestris (strain 8004), this protein is Lipoyl synthase.